A 95-amino-acid chain; its full sequence is DNA-directed RNA polymerase subunit Rpo11 (95 aa).

Belongs to the archaeal Rpo11/eukaryotic RPB11/RPC19 RNA polymerase subunit family. As to quaternary structure, part of the RNA polymerase complex.

The protein localises to the cytoplasm. It carries out the reaction RNA(n) + a ribonucleoside 5'-triphosphate = RNA(n+1) + diphosphate. Functionally, DNA-dependent RNA polymerase (RNAP) catalyzes the transcription of DNA into RNA using the four ribonucleoside triphosphates as substrates. The chain is DNA-directed RNA polymerase subunit Rpo11 from Pyrococcus furiosus (strain ATCC 43587 / DSM 3638 / JCM 8422 / Vc1).